We begin with the raw amino-acid sequence, 307 residues long: Putative S-adenosyl-L-methionine-dependent methyltransferase MUL_4430 (307 aa).

S-adenosyl-L-methionine is bound by residues Asp-128 and 157–158 (DL).

This sequence belongs to the UPF0677 family.

Exhibits S-adenosyl-L-methionine-dependent methyltransferase activity. This is Putative S-adenosyl-L-methionine-dependent methyltransferase MUL_4430 from Mycobacterium ulcerans (strain Agy99).